Consider the following 2178-residue polypeptide: Genome polyprotein (2178 aa).

The interval 1 to 20 (MGAQVSTQKSGSHENQNILT) is disordered. Residue Gly-2 is the site of N-myristoyl glycine; by host attachment. Residues 2–1490 (GAQVSTQKSG…AVNQASMIIN (1489 aa)) are Cytoplasmic-facing. An amphipathic alpha-helix region spans residues 564–584 (ALTEGLSDELEEVIVEKTKQT). Residues His-875 and Asp-893 each act as for protease 2A activity in the active site. 2 residues coordinate Zn(2+): Cys-910 and Cys-912. Catalysis depends on Cys-964, which acts as the For protease 2A activity. Positions 970 and 972 each coordinate Zn(2+). Residues 1100–1172 (NDGWFRKFND…HDSNPTQEKR (73 aa)) form a membrane-binding region. The interval 1100 to 1238 (NDGWFRKFND…TPGSGKSLTT (139 aa)) is oligomerization. Residues 1121-1125 (ANKIS) are RNA-binding. The region spanning 1204–1360 (KNKITNYMQF…STYTKNGKLN (157 aa)) is the SF3 helicase domain. Zn(2+)-binding residues include Cys-1368, Cys-1371, Cys-1380, and Cys-1385. The C4-type zinc-finger motif lies at 1368–1385 (CKDCHQPSNFKKCCPLVC). The RNA-binding stretch occupies residues 1412–1419 (DYKNKVKI). The tract at residues 1423-1428 (LEVLFQ) is oligomerization. The stretch at 1491 to 1506 (TILMFVSTLGIVYVIY) is an intramembrane region. The Cytoplasmic segment spans residues 1507-2178 (KLFAQTQGPY…VLRRRWLDLF (672 aa)). Tyr-1516 is subject to O-(5'-phospho-RNA)-tyrosine. A Peptidase C3 domain is found at 1537-1714 (GPNTEFALSL…FSAQLKKQYF (178 aa)). Catalysis depends on for protease 3C activity residues His-1576, Glu-1607, and Cys-1682. A RdRp catalytic domain is found at 1946-2059 (HLMAFDYSNF…SYPFELDSNI (114 aa)). 2 residues coordinate Mg(2+): Asp-1951 and Asp-2045.

This sequence belongs to the picornaviruses polyprotein family. Interacts with capsid protein VP1 and capsid protein VP3 to form heterotrimeric protomers. In terms of assembly, interacts with capsid protein VP0, and capsid protein VP3 to form heterotrimeric protomers. Five protomers subsequently associate to form pentamers which serve as building blocks for the capsid. Interacts with capsid protein VP2, capsid protein VP3 and capsid protein VP4 following cleavage of capsid protein VP0. As to quaternary structure, interacts with capsid protein VP1 and capsid protein VP3 in the mature capsid. Interacts with capsid protein VP0 and capsid protein VP1 to form heterotrimeric protomers. Five protomers subsequently associate to form pentamers which serve as building blocks for the capsid. Interacts with capsid protein VP4 in the mature capsid. Interacts with protein 2C; this interaction may be important for virion morphogenesis. In terms of assembly, interacts with capsid protein VP1 and capsid protein VP3. As to quaternary structure, homodimer. Homohexamer; forms a hexameric ring structure with 6-fold symmetry characteristic of AAA+ ATPases. Interacts (via N-terminus) with host RTN3 (via reticulon domain); this interaction is important for viral replication. Interacts with capsid protein VP3; this interaction may be important for virion morphogenesis. In terms of assembly, interacts with protein 3CD. As to quaternary structure, homodimer. Interacts with host GBF1. Interacts (via GOLD domain) with host ACBD3 (via GOLD domain); this interaction allows the formation of a viral protein 3A/ACBD3 heterotetramer with a 2:2 stoichiometry, which will stimulate the recruitment of host PI4KB in order to synthesize PI4P at the viral RNA replication sites. Interacts with RNA-directed RNA polymerase. In terms of assembly, interacts with protein 3AB and with RNA-directed RNA polymerase. As to quaternary structure, interacts with Viral protein genome-linked and with protein 3CD. Mg(2+) serves as cofactor. In terms of processing, specific enzymatic cleavages in vivo by the viral proteases yield processing intermediates and the mature proteins. Post-translationally, myristoylation is required for the formation of pentamers during virus assembly. Further assembly of 12 pentamers and a molecule of genomic RNA generates the provirion. During virion maturation, immature virions are rendered infectious following cleavage of VP0 into VP4 and VP2. This maturation seems to be an autocatalytic event triggered by the presence of RNA in the capsid and it is followed by a conformational change infectious virion. In terms of processing, myristoylation is required during RNA encapsidation and formation of the mature virus particle. Post-translationally, VPg is uridylylated by the polymerase into VPg-pUpU. This acts as a nucleotide-peptide primer for the genomic RNA replication.

The protein resides in the virion. The protein localises to the host cytoplasm. Its subcellular location is the host cytoplasmic vesicle membrane. It is found in the host nucleus. It carries out the reaction a ribonucleoside 5'-triphosphate + H2O = a ribonucleoside 5'-diphosphate + phosphate + H(+). It catalyses the reaction Selective cleavage of Tyr-|-Gly bond in the picornavirus polyprotein.. The catalysed reaction is RNA(n) + a ribonucleoside 5'-triphosphate = RNA(n+1) + diphosphate. The enzyme catalyses Selective cleavage of Gln-|-Gly bond in the poliovirus polyprotein. In other picornavirus reactions Glu may be substituted for Gln, and Ser or Thr for Gly.. Replication or transcription is subject to high level of random mutations by the nucleotide analog ribavirin. Its function is as follows. Forms an icosahedral capsid of pseudo T=3 symmetry with capsid proteins VP2 and VP3. The capsid is 300 Angstroms in diameter, composed of 60 copies of each capsid protein and enclosing the viral positive strand RNA genome. Capsid protein VP1 mainly forms the vertices of the capsid. Capsid protein VP1 interacts with host cell receptor to provide virion attachment to target host cells. This attachment induces virion internalization. Tyrosine kinases are probably involved in the entry process. After binding to its receptor, the capsid undergoes conformational changes. Capsid protein VP1 N-terminus (that contains an amphipathic alpha-helix) and capsid protein VP4 are externalized. Together, they shape a pore in the host membrane through which viral genome is translocated to host cell cytoplasm. In terms of biological role, forms an icosahedral capsid of pseudo T=3 symmetry with capsid proteins VP2 and VP3. The capsid is 300 Angstroms in diameter, composed of 60 copies of each capsid protein and enclosing the viral positive strand RNA genome. Lies on the inner surface of the capsid shell. After binding to the host receptor, the capsid undergoes conformational changes. Capsid protein VP4 is released, Capsid protein VP1 N-terminus is externalized, and together, they shape a pore in the host membrane through which the viral genome is translocated into the host cell cytoplasm. Functionally, component of immature procapsids, which is cleaved into capsid proteins VP4 and VP2 after maturation. Allows the capsid to remain inactive before the maturation step. Its function is as follows. Cysteine protease that cleaves viral polyprotein and specific host proteins. It is responsible for the autocatalytic cleavage between the P1 and P2 regions, which is the first cleavage occurring in the polyprotein. Also cleaves the host translation initiation factor EIF4G1, in order to shut down the capped cellular mRNA translation. Inhibits the host nucleus-cytoplasm protein and RNA trafficking by cleaving host members of the nuclear pores. Counteracts stress granule formation probably by antagonizing its assembly or promoting its dissassembly. In terms of biological role, plays an essential role in the virus replication cycle by acting as a viroporin. Creates a pore in the host endoplasmic reticulum and as a consequence releases Ca2+ in the cytoplasm of infected cell. In turn, high levels of cytoplasmic calcium may trigger membrane trafficking and transport of viral ER-associated proteins to viroplasms, sites of viral genome replication. Induces and associates with structural rearrangements of intracellular membranes. Displays RNA-binding, nucleotide binding and NTPase activities. May play a role in virion morphogenesis and viral RNA encapsidation by interacting with the capsid protein VP3. Functionally, localizes the viral replication complex to the surface of membranous vesicles. Together with protein 3CD binds the Cis-Active RNA Element (CRE) which is involved in RNA synthesis initiation. Acts as a cofactor to stimulate the activity of 3D polymerase, maybe through a nucleid acid chaperone activity. Its function is as follows. Localizes the viral replication complex to the surface of membranous vesicles. It inhibits host cell endoplasmic reticulum-to-Golgi apparatus transport and causes the disassembly of the Golgi complex, possibly through GBF1 interaction. This would result in depletion of MHC, trail receptors and IFN receptors at the host cell surface. Plays an essential role in viral RNA replication by recruiting ACBD3 and PI4KB at the viral replication sites, thereby allowing the formation of the rearranged membranous structures where viral replication takes place. In terms of biological role, acts as a primer for viral RNA replication and remains covalently bound to viral genomic RNA. VPg is uridylylated prior to priming replication into VPg-pUpU. The oriI viral genomic sequence may act as a template for this. The VPg-pUpU is then used as primer on the genomic RNA poly(A) by the RNA-dependent RNA polymerase to replicate the viral genome. During genome replication, the VPg-RNA linkage is removed by the host TDP2, thereby accelerating replication. During the late stage of the replication cycle, host TDP2 is excluded from sites of viral RNA synthesis and encapsidation, allowing for the generation of progeny virions. Involved in the viral replication complex and viral polypeptide maturation. It exhibits protease activity with a specificity and catalytic efficiency that is different from protease 3C. Protein 3CD lacks polymerase activity. Protein 3CD binds to the 5'UTR of the viral genome. Functionally, replicates the viral genomic RNA on the surface of intracellular membranes. May form linear arrays of subunits that propagate along a strong head-to-tail interaction called interface-I. Covalently attaches UMP to a tyrosine of VPg, which is used to prime RNA synthesis. The positive stranded RNA genome is first replicated at virus induced membranous vesicles, creating a dsRNA genomic replication form. This dsRNA is then used as template to synthesize positive stranded RNA genomes. ss(+)RNA genomes are either translated, replicated or encapsidated. Its function is as follows. Major viral protease that mediates proteolytic processing of the polyprotein. Cleaves host EIF5B, contributing to host translation shutoff. Also cleaves host PABPC1, contributing to host translation shutoff. Cleaves host NLRP1, triggers host N-glycine-mediated degradation of the autoinhibitory NLRP1 N-terminal fragment. In Homo sapiens (Human), this protein is Genome polyprotein.